The following is a 251-amino-acid chain: 3-dehydroquinate dehydratase (251 aa).

Residues 47-49 and Arg-83 each bind 3-dehydroquinate; that span reads EWR. The active-site Proton donor/acceptor is the His-144. Lys-171 functions as the Schiff-base intermediate with substrate in the catalytic mechanism. 3-dehydroquinate is bound by residues Arg-214, Ser-233, and Gln-237.

This sequence belongs to the type-I 3-dehydroquinase family. Homodimer.

It carries out the reaction 3-dehydroquinate = 3-dehydroshikimate + H2O. The protein operates within metabolic intermediate biosynthesis; chorismate biosynthesis; chorismate from D-erythrose 4-phosphate and phosphoenolpyruvate: step 3/7. Functionally, involved in the third step of the chorismate pathway, which leads to the biosynthesis of aromatic amino acids. Catalyzes the cis-dehydration of 3-dehydroquinate (DHQ) and introduces the first double bond of the aromatic ring to yield 3-dehydroshikimate. This is 3-dehydroquinate dehydratase from Klebsiella pneumoniae (strain 342).